The primary structure comprises 129 residues: Small ribosomal subunit protein eS6 (129 aa).

Residues 53–88 (TGGSDTSGRPMRPDVRGVTTKEIMSDGGVGFEPTTD) are disordered.

It belongs to the eukaryotic ribosomal protein eS6 family.

The chain is Small ribosomal subunit protein eS6 (rps6e) from Haloarcula marismortui (strain ATCC 43049 / DSM 3752 / JCM 8966 / VKM B-1809) (Halobacterium marismortui).